The following is a 200-amino-acid chain: Dephospho-CoA kinase (200 aa).

The 198-residue stretch at R3–N200 folds into the DPCK domain. G11 to T16 serves as a coordination point for ATP.

The protein belongs to the CoaE family.

It localises to the cytoplasm. The enzyme catalyses 3'-dephospho-CoA + ATP = ADP + CoA + H(+). The protein operates within cofactor biosynthesis; coenzyme A biosynthesis; CoA from (R)-pantothenate: step 5/5. In terms of biological role, catalyzes the phosphorylation of the 3'-hydroxyl group of dephosphocoenzyme A to form coenzyme A. In Corynebacterium glutamicum (strain ATCC 13032 / DSM 20300 / JCM 1318 / BCRC 11384 / CCUG 27702 / LMG 3730 / NBRC 12168 / NCIMB 10025 / NRRL B-2784 / 534), this protein is Dephospho-CoA kinase.